Here is a 1405-residue protein sequence, read N- to C-terminus: DNA-directed RNA polymerase subunit beta' (1405 aa).

4 residues coordinate Zn(2+): Cys70, Cys72, Cys85, and Cys88. Residues Asp460, Asp462, and Asp464 each contribute to the Mg(2+) site. Residues Cys815, Cys890, Cys897, and Cys900 each contribute to the Zn(2+) site.

This sequence belongs to the RNA polymerase beta' chain family. In terms of assembly, the RNAP catalytic core consists of 2 alpha, 1 beta, 1 beta' and 1 omega subunit. When a sigma factor is associated with the core the holoenzyme is formed, which can initiate transcription. Mg(2+) is required as a cofactor. Zn(2+) serves as cofactor.

It carries out the reaction RNA(n) + a ribonucleoside 5'-triphosphate = RNA(n+1) + diphosphate. Functionally, DNA-dependent RNA polymerase catalyzes the transcription of DNA into RNA using the four ribonucleoside triphosphates as substrates. This chain is DNA-directed RNA polymerase subunit beta', found in Xanthomonas campestris pv. campestris (strain 8004).